The primary structure comprises 678 residues: uncharacterized protein (678 aa).

2 disordered regions span residues 123–156 (TPLS…TDSV) and 381–417 (TETT…TEHS).

It is found in the cytoplasm. This is an uncharacterized protein from Schizosaccharomyces pombe (strain 972 / ATCC 24843) (Fission yeast).